Reading from the N-terminus, the 1131-residue chain is MTDVSSPAGGAASPVEMATSSSSAATTLTNGANKTAISTAAGVAPGAVPGPGSAAIPASSSSGNQVKLEHHHRQSNNNRPAATNRSSETKLRSPAGESDGASRLMTPAGSSSTPSQSPSPSQSPSQASIQTQTSQQDRLAKASTTASQQDVDEVARLFEEKPEAFEKWLTERAPPEALSRLQEFIENRKPHKRPSVTSDLFQQWMAASPTVQQKSPRSLSNSSASSIPECRRHLMDLDEGELFMELIRDVANELDIDVLCHKILVNVGLLTHADRGSLFLAKGTPTNKYLVAKLFDVTQKTALKDAVTRASAEEIIIPFGIGIAGMVAQTKQMINIKEAYKDARFNCEIDLKTGYKTNAILCMPICNYEGDIIGVAQIINKTNGGCFKGCMEFDEHDVEIFRRYLTFCGIGIQNAQLFEMSVQEYRRNQILLNLARSIFEEQNNLECLVTKIMTEARELLKCERCSVFLVDLDCCEASHLEKIIEKPNQPATRAIKSADSFEEKKMRNRFTVLFELGGEYQAANVSRPSVSELSSSTLAQIAQFVATTGQTVNICDVIEWVRDHNQIRAEDEIDSTQAILCMPIMNAQKKVIGVAQLINKANGVPFTDSDASIFEAFAIFCGLGIHNTQMYENACKLMAKQKVALECLSYHATASQDQTEKLTQDVIAEAESYNLYSFTFTDFELVDDDTCRAVLRMFMQCNLVSQFQIPYDVLCRWVLSVRKNYRPVKYHNWRHALNVAQTMFAMLKTGKMERFMTDLEILGLLVACLCHDLDHRGTNNAFQTKTESPLAILYTTSTMEHHHFDQCVMILNSEGNNIFQALSPEDYRSVMKTVESAILSTDLAMYFKKRNAFLELVENGEFDWQGEEKKDLLCGMMMTACDVSAIAKPWEVQHKVAKLVADEFFDQGDLEKLQLNTQPVAMMDRERKDELPKMQVGFIDVICLPLYRVLCDTFPWITPLYEGTLENRRNWQDLAEKVEMGLTWIDHDTIDKPVEEFAACADEEIKDIEFTVTTLNCNQQSQHGSEDSHTPEHQRSGSRLSMKKTGALGKAVRSKLSKTLYNSMDGSKPKTSLKLLESHVSEDMDDKSPTSPSQPQASGSMGRMSASSSTSSAGGQMVDKSKKRSKLCALL.

2 disordered regions span residues 1-26 and 42-150; these read MTDV…SAAT and GVAP…SQQD. The span at 42–63 shows a compositional bias: low complexity; it reads GVAPGAVPGPGSAAIPASSSSG. The segment covering 75–86 has biased composition (polar residues); the sequence is SNNNRPAATNRS. The segment covering 110–136 has biased composition (low complexity); that stretch reads SSSTPSQSPSPSQSPSQASIQTQTSQQ. 2 GAF domains span residues 255 to 412 and 444 to 625; these read DIDV…GIGI and NLEC…GLGI. A PDEase domain is found at 655 to 978; it reads SQDQTEKLTQ…RNWQDLAEKV (324 aa). The active-site Proton donor is the His731. A divalent metal cation-binding residues include His735, His771, Asp772, and Asp882. Disordered regions lie at residues 1019-1048 and 1078-1131; these read QQSQ…TGAL and SHVS…CALL. Basic and acidic residues-rich tracts occupy residues 1024 to 1035 and 1078 to 1088; these read GSEDSHTPEHQR and SHVSEDMDDKS. Residues 1097–1117 are compositionally biased toward low complexity; it reads ASGSMGRMSASSSTSSAGGQM. The span at 1121–1131 shows a compositional bias: basic residues; the sequence is SKKRSKLCALL. At Cys1128 the chain carries Cysteine methyl ester. A lipid anchor (S-farnesyl cysteine) is attached at Cys1128. The propeptide at 1129–1131 is removed in mature form; sequence ALL.

The protein belongs to the cyclic nucleotide phosphodiesterase family. As to quaternary structure, interacts with PrBP. The cofactor is a divalent metal cation.

Its subcellular location is the cell membrane. It catalyses the reaction 3',5'-cyclic GMP + H2O = GMP + H(+). Its function is as follows. Has a role regulating cGMP transport in Malpighian tubule principal cells. The sequence is that of cGMP-specific 3',5'-cyclic phosphodiesterase from Drosophila erecta (Fruit fly).